We begin with the raw amino-acid sequence, 425 residues long: Tyrosine--tRNA ligase (425 aa).

Tyrosine 37 contributes to the L-tyrosine binding site. The 'HIGH' region signature appears at 42–51 (PTADSLHLGH). Residues tyrosine 174 and glutamine 178 each contribute to the L-tyrosine site. Positions 234-238 (KFGKS) match the 'KMSKS' region motif. Position 237 (lysine 237) interacts with ATP. Positions 357–422 (DGLIDALAAS…RGKKLYALLV (66 aa)) constitute an S4 RNA-binding domain.

The protein belongs to the class-I aminoacyl-tRNA synthetase family. TyrS type 1 subfamily. As to quaternary structure, homodimer.

The protein resides in the cytoplasm. It catalyses the reaction tRNA(Tyr) + L-tyrosine + ATP = L-tyrosyl-tRNA(Tyr) + AMP + diphosphate + H(+). Its function is as follows. Catalyzes the attachment of tyrosine to tRNA(Tyr) in a two-step reaction: tyrosine is first activated by ATP to form Tyr-AMP and then transferred to the acceptor end of tRNA(Tyr). This is Tyrosine--tRNA ligase from Laribacter hongkongensis (strain HLHK9).